Reading from the N-terminus, the 154-residue chain is Ribosome maturation factor RimP (154 aa).

Belongs to the RimP family.

It is found in the cytoplasm. Functionally, required for maturation of 30S ribosomal subunits. This Clostridium kluyveri (strain ATCC 8527 / DSM 555 / NBRC 12016 / NCIMB 10680 / K1) protein is Ribosome maturation factor RimP.